A 108-amino-acid polypeptide reads, in one-letter code: Evasin P1156 (108 aa).

The N-terminal stretch at 1–28 (MEVKTYAFLQIAVFIFLGMQIFASLTDA) is a signal peptide. Cystine bridges form between Cys-41-Cys-63, Cys-45-Cys-65, and Cys-56-Cys-76. Residue Asn-44 is glycosylated (N-linked (GlcNAc...) asparagine). The disordered stretch occupies residues 89-108 (NPSDSEIEAAKPKRSDTLSH). A compositionally biased stretch (basic and acidic residues) spans 96–108 (EAAKPKRSDTLSH).

The protein localises to the secreted. In terms of biological role, salivary chemokine-binding protein which has chemokine-neutralizing activity and binds to host chemokines CXCL1, CXCL2, CXCL3, CXCL5, CXCL6 and CXCL8. The polypeptide is Evasin P1156 (Ixodes ricinus (Common tick)).